Here is a 2699-residue protein sequence, read N- to C-terminus: UPF0648 protein C3H5.09c (2699 aa).

Asn-21 carries N-linked (GlcNAc...) asparagine glycosylation. A helical membrane pass occupies residues 24–44 (FVWVVIATGFLFHLVLFVLSY). N-linked (GlcNAc...) asparagine glycans are attached at residues Asn-288, Asn-293, Asn-334, Asn-345, Asn-433, Asn-507, Asn-551, Asn-655, Asn-760, Asn-993, Asn-1000, Asn-1003, Asn-1006, and Asn-1009. Residues 975–1021 (KAKDPSPKSASESSSFYQNGSDIDDNDSNSSNTSNHTTENANAQQRK) form a disordered region. The segment covering 981 to 995 (PKSASESSSFYQNGS) has biased composition (low complexity). A coiled-coil region spans residues 1006–1033 (NTSNHTTENANAQQRKLEDLNRSFEDFL). Positions 1010 to 1019 (HTTENANAQQ) are enriched in polar residues. 19 N-linked (GlcNAc...) asparagine glycosylation sites follow: Asn-1026, Asn-1039, Asn-1046, Asn-1236, Asn-1255, Asn-1344, Asn-1527, Asn-1595, Asn-1791, Asn-1916, Asn-2032, Asn-2048, Asn-2256, Asn-2285, Asn-2388, Asn-2407, Asn-2417, Asn-2508, and Asn-2622. Residues 1758-1818 (QYELLQKRRK…TLSDHYRLLE (61 aa)) are a coiled coil. The interval 2393-2447 (FPHIYSRNHDKRKENGSQGEADNSNYSGSLMRRRTNDQEEDALATPSSSRRDSRS) is disordered. Residues 2408-2420 (GSQGEADNSNYSG) are compositionally biased toward polar residues. Disordered stretches follow at residues 2606 to 2632 (AEENQEEGSPASAISRNHSTRSSLNSP) and 2647 to 2676 (ADIVKRHIPPTINGKRSKNKGNEGSNARVD). Polar residues predominate over residues 2617-2632 (SAISRNHSTRSSLNSP).

This sequence belongs to the UPF0648 family.

Its subcellular location is the membrane. The chain is UPF0648 protein C3H5.09c from Schizosaccharomyces pombe (strain 972 / ATCC 24843) (Fission yeast).